The following is a 152-amino-acid chain: Avidin (152 aa).

Residues 1-24 (MVHATSPLLLLLLLSLALVAPGLS) form the signal peptide. Residues 26-149 (RKCSLTGKWT…GINIFTRLRT (124 aa)) enclose the Avidin-like domain. A disulfide bridge connects residues C28 and C107. N41 is a glycosylation site (N-linked (GlcNAc...) asparagine). Y57 lines the biotin pocket.

Belongs to the avidin/streptavidin family. Homotetramer. Post-translationally, N-linked glycan at Asn-41 consists of GlcNAc(beta1-2)Man(alpha1-3)[GlcNAc(beta1-4)][Man(alpha1-?)Man(alpha1-6)] Man(beta1-4)GlcNAc(beta1-4)GlcNAc. As to expression, synthesized in hen oviduct and concentrated in egg white (where it represents 0.05% of the total protein).

It is found in the secreted. In terms of biological role, the biological function of avidin is not known. Forms a strong non-covalent specific complex with biotin (one molecule of biotin per subunit of avidin). In Gallus gallus (Chicken), this protein is Avidin (AVD).